The primary structure comprises 206 residues: Alpha-S1-casein (206 aa).

The signal sequence occupies residues 1–15 (MKLLIFICLAAVALA). Ser33, Ser77, Ser78, Ser79, Ser80, Ser81, Ser82, and Ser89 each carry phosphoserine. A disordered region spans residues 67–106 (HGMEGHEQRGSSSSSSEEVVGNSAEQKHVQKEEDVPSQSY). Basic and acidic residues predominate over residues 91–100 (EQKHVQKEED).

It belongs to the alpha-casein family. In terms of tissue distribution, mammary gland specific. Secreted in milk.

It localises to the secreted. Important role in the capacity of milk to transport calcium phosphate. This is Alpha-S1-casein (CSN1S1) from Sus scrofa (Pig).